Reading from the N-terminus, the 263-residue chain is Kallikrein 1-related peptidase b27 (263 aa).

Residues 1 to 17 (MRFLILFLALSLGGIDA) form the signal peptide. Positions 18–24 (APPVQSR) are cleaved as a propeptide — activation peptide. The Peptidase S1 domain maps to 25–260 (IIGGFKCKKN…FTSWIKDTMA (236 aa)). 5 cysteine pairs are disulfide-bonded: Cys-31–Cys-175, Cys-50–Cys-66, Cys-154–Cys-221, Cys-186–Cys-200, and Cys-211–Cys-236. The active-site Charge relay system is the His-65. Asn-69 and Asn-105 each carry an N-linked (GlcNAc...) asparagine glycan. Asp-122 acts as the Charge relay system in catalysis. The active-site Charge relay system is Ser-215.

The protein belongs to the peptidase S1 family. Kallikrein subfamily. As to expression, expressed in testis and submaxillary gland. Not expressed in heart, brain, spleen, lung, liver, muscle, kidney and ovary. In the testis, expression localized specifically to Leydig cells in the interstitial tissues.

With respect to regulation, strongly inhibited by protease inhibitors diisopropyl fluorophosphate, phenylmethanesulfonyl fluoride and SBTI. Functionally, serine protease with chymotrypsin-like cleavage specificity. Shows activity towards casein, gelatin, IGFBP3 and fibronectin but not towards laminin or collagens I and IV. Does not hydrolyze kininogin to release Lys-bradykinin. The chain is Kallikrein 1-related peptidase b27 (Klk1b27) from Mus musculus (Mouse).